We begin with the raw amino-acid sequence, 398 residues long: SEC12-like protein 1 (398 aa).

Residue Met-1 is modified to N-acetylmethionine. Residues 1–337 lie on the Cytoplasmic side of the membrane; that stretch reads MEIEEASRES…TVPKEWKEWQ (337 aa). WD repeat units follow at residues 71 to 110, 120 to 159, 162 to 201, 252 to 291, and 296 to 334; these read DSDG…TGIT, QNAG…VILD, KAHK…PLST, LSRK…IYHY, and HLGQ…KEWK. The helical transmembrane segment at 338–358 threads the bilayer; that stretch reads IYALLFCLFMASVIAAYVFFE. Topologically, residues 359–398 are lumenal; the sequence is NSDSFWKLPMGKDQKRPKISLFGGSSSTPSEDHSRWNLDL.

As to expression, ubiquitous with higher levels in flowers, roots and senescing leaves.

It is found in the endoplasmic reticulum membrane. Its function is as follows. Involved in Pi uptake by facilitating the trafficking of PHT1-1/PHT1;1 from the endoplasmic reticulum to the plasma membrane. The protein is SEC12-like protein 1 (PHF1) of Arabidopsis thaliana (Mouse-ear cress).